The chain runs to 364 residues: MKTNLLNYDLQGLTRHFADTGEKPFRAKQVMRWMHQSGAQNFNEMTDLAKSLRHKLNEQASIEIPKLMMSQESSDGTRKWLLDVGTGNGVETVFIPESDRGTLCISSQVGCALECTFCSTGRQGFNRNLTAAEIIGQLWWANKAMGVTPKNERVISNVVMMGMGEPMANFDNVVTALSIMLDDHGYGLSRRRVTVSTSGMVPQMDRLRDVMPVALAVSLHASNDEVRNQIVPLNKKYPLKELMAACQRYLVKAPRDFITFEYVMLDGINDRAQHARELIELVKDVPCKFNLIPFNPFPNSGYERSSNENIRVFRDILQQAGFVVTVRKTRGDDIDAACGQLAGQVQDKTRRQQKWQQILIGQQG.

Glu91 acts as the Proton acceptor in catalysis. The 237-residue stretch at 97 to 333 (ESDRGTLCIS…VTVRKTRGDD (237 aa)) folds into the Radical SAM core domain. A disulfide bridge connects residues Cys104 and Cys338. [4Fe-4S] cluster contacts are provided by Cys111, Cys115, and Cys118. Residues 164–165 (GE), Ser196, 218–220 (SLH), and Asn295 contribute to the S-adenosyl-L-methionine site. Cys338 acts as the S-methylcysteine intermediate in catalysis.

It belongs to the radical SAM superfamily. RlmN family. It depends on [4Fe-4S] cluster as a cofactor.

The protein localises to the cytoplasm. It carries out the reaction adenosine(2503) in 23S rRNA + 2 reduced [2Fe-2S]-[ferredoxin] + 2 S-adenosyl-L-methionine = 2-methyladenosine(2503) in 23S rRNA + 5'-deoxyadenosine + L-methionine + 2 oxidized [2Fe-2S]-[ferredoxin] + S-adenosyl-L-homocysteine. The enzyme catalyses adenosine(37) in tRNA + 2 reduced [2Fe-2S]-[ferredoxin] + 2 S-adenosyl-L-methionine = 2-methyladenosine(37) in tRNA + 5'-deoxyadenosine + L-methionine + 2 oxidized [2Fe-2S]-[ferredoxin] + S-adenosyl-L-homocysteine. Its function is as follows. Specifically methylates position 2 of adenine 2503 in 23S rRNA and position 2 of adenine 37 in tRNAs. m2A2503 modification seems to play a crucial role in the proofreading step occurring at the peptidyl transferase center and thus would serve to optimize ribosomal fidelity. The polypeptide is Dual-specificity RNA methyltransferase RlmN (Neisseria meningitidis serogroup C (strain 053442)).